Consider the following 336-residue polypeptide: NADH-quinone oxidoreductase subunit H (336 aa).

8 helical membrane-spanning segments follow: residues 14 to 34, 82 to 102, 115 to 135, 161 to 181, 186 to 206, 247 to 267, 273 to 293, and 312 to 332; these read IIVA…AFLV, IIFL…WAVI, VGIL…IMAG, IGLV…SDVV, TVWF…SALA, ILMS…PLDV, VPGP…FVWV, and VFLP…VTFD.

Belongs to the complex I subunit 1 family. In terms of assembly, NDH-1 is composed of 14 different subunits. Subunits NuoA, H, J, K, L, M, N constitute the membrane sector of the complex.

It localises to the cell inner membrane. The catalysed reaction is a quinone + NADH + 5 H(+)(in) = a quinol + NAD(+) + 4 H(+)(out). Functionally, NDH-1 shuttles electrons from NADH, via FMN and iron-sulfur (Fe-S) centers, to quinones in the respiratory chain. The immediate electron acceptor for the enzyme in this species is believed to be ubiquinone. Couples the redox reaction to proton translocation (for every two electrons transferred, four hydrogen ions are translocated across the cytoplasmic membrane), and thus conserves the redox energy in a proton gradient. This subunit may bind ubiquinone. This chain is NADH-quinone oxidoreductase subunit H, found in Rhodospirillum centenum (strain ATCC 51521 / SW).